Reading from the N-terminus, the 249-residue chain is MTTPDGIVSALAVALARQSESHADCPLFNDPYAQVFIDAALSRGCQLPSDETSERINGIANYASSRTKWFDEYFIAAGAHGLEQMVIVAAGLDARAWRLPWVAGTTLFEIDHPGVLKFKNEALHEHGESPSVSRYVPVPADLSDGWSERLRDAGFDVSEPTAWAVEGLLPYVADGPHLLFDRIHEISPAGSRLAVEAVGTGVADWLSTQGWQVTVIGAQELMTRYGRCGDHSDTDAGMDTVFVNATRDR.

Residues D111 and 141–142 each bind S-adenosyl-L-methionine; that span reads DL.

Belongs to the UPF0677 family.

Its function is as follows. Exhibits S-adenosyl-L-methionine-dependent methyltransferase activity. The chain is Putative S-adenosyl-L-methionine-dependent methyltransferase Mjls_0570 from Mycobacterium sp. (strain JLS).